Here is a 224-residue protein sequence, read N- to C-terminus: Casparian strip membrane protein 3 (224 aa).

The interval 1 to 30 (MESKKEGVASAPTSPESRRTRSNGKGKTIA) is disordered. Residues 1–57 (MESKKEGVASAPTSPESRRTRSNGKGKTIAEATPPSVTVVSTKVTPSPRGGWRKGAA) lie on the Cytoplasmic side of the membrane. The helical transmembrane segment at 58-78 (ILDFILRLGAISSAIGAAAVM) threads the bilayer. At 79–105 (GNNEQILPFFTQFFQFHVQWDDFPMFQ) the chain is on the extracellular side. The helical transmembrane segment at 106–126 (FFVFANGAAVVFLILSLPFSI) threads the bilayer. At 127-138 (VCIVRPFAVGPR) the chain is on the cytoplasmic side. The helical transmembrane segment at 139–159 (LLLVIVDIFAMALVIAAASAA) threads the bilayer. The Extracellular portion of the chain corresponds to 160–191 (AAVVYLAHNGSQDANWIAICQQYTDFCQVTSQ). N-linked (GlcNAc...) asparagine glycosylation occurs at N168. A helical transmembrane segment spans residues 192 to 212 (AVVASFVAAVFLICLIVLSSV). The Cytoplasmic segment spans residues 213 to 224 (ALKKGLKREFGW).

It belongs to the Casparian strip membrane proteins (CASP) family. In terms of assembly, homodimer and heterodimers.

It is found in the cell membrane. Its function is as follows. Regulates membrane-cell wall junctions and localized cell wall deposition. Required for establishment of the Casparian strip membrane domain (CSD) and the subsequent formation of Casparian strips, a cell wall modification of the root endodermis that determines an apoplastic barrier between the intraorganismal apoplasm and the extraorganismal apoplasm and prevents lateral diffusion. In Vigna unguiculata (Cowpea), this protein is Casparian strip membrane protein 3.